We begin with the raw amino-acid sequence, 78 residues long: Beta-defensin 12 (78 aa).

An N-terminal signal peptide occupies residues 1–27 (MALSREVFYFGFALFFIVVELPSGSWA). Intrachain disulfides connect Cys46–Cys73, Cys53–Cys67, and Cys57–Cys74.

This sequence belongs to the beta-defensin family. As to expression, only expressed in epididymis (caput, corpus and cauda).

It is found in the secreted. Functionally, has antibacterial activity. The sequence is that of Beta-defensin 12 (Defb12) from Mus musculus (Mouse).